Reading from the N-terminus, the 215-residue chain is Protein-L-isoaspartate O-methyltransferase (215 aa).

The active site involves S62.

This sequence belongs to the methyltransferase superfamily. L-isoaspartyl/D-aspartyl protein methyltransferase family.

The protein resides in the cytoplasm. It catalyses the reaction [protein]-L-isoaspartate + S-adenosyl-L-methionine = [protein]-L-isoaspartate alpha-methyl ester + S-adenosyl-L-homocysteine. Functionally, catalyzes the methyl esterification of L-isoaspartyl residues in peptides and proteins that result from spontaneous decomposition of normal L-aspartyl and L-asparaginyl residues. It plays a role in the repair and/or degradation of damaged proteins. This chain is Protein-L-isoaspartate O-methyltransferase, found in Nitratidesulfovibrio vulgaris (strain DSM 19637 / Miyazaki F) (Desulfovibrio vulgaris).